The sequence spans 171 residues: uncharacterized protein (171 aa).

This is an uncharacterized protein from Rhizobium etli.